Consider the following 244-residue polypeptide: Type III pantothenate kinase (244 aa).

An ATP-binding site is contributed by 8 to 15 (DQGNSACK). Substrate contacts are provided by residues Tyr-88 and 94 to 97 (GADR). Asp-96 (proton acceptor) is an active-site residue. A K(+)-binding site is contributed by Asp-117. ATP is bound at residue Thr-120. Residue Thr-175 coordinates substrate.

This sequence belongs to the type III pantothenate kinase family. As to quaternary structure, homodimer. The cofactor is NH4(+). K(+) is required as a cofactor.

The protein localises to the cytoplasm. It carries out the reaction (R)-pantothenate + ATP = (R)-4'-phosphopantothenate + ADP + H(+). The protein operates within cofactor biosynthesis; coenzyme A biosynthesis; CoA from (R)-pantothenate: step 1/5. Its function is as follows. Catalyzes the phosphorylation of pantothenate (Pan), the first step in CoA biosynthesis. The sequence is that of Type III pantothenate kinase from Porphyromonas gingivalis (strain ATCC BAA-308 / W83).